Here is a 256-residue protein sequence, read N- to C-terminus: Thiazole synthase (256 aa).

Lys-96 (schiff-base intermediate with DXP) is an active-site residue. 1-deoxy-D-xylulose 5-phosphate is bound by residues Gly-157, 183–184, and 205–206; these read AG and NT.

This sequence belongs to the ThiG family. In terms of assembly, homotetramer. Forms heterodimers with either ThiH or ThiS.

The protein localises to the cytoplasm. It carries out the reaction [ThiS sulfur-carrier protein]-C-terminal-Gly-aminoethanethioate + 2-iminoacetate + 1-deoxy-D-xylulose 5-phosphate = [ThiS sulfur-carrier protein]-C-terminal Gly-Gly + 2-[(2R,5Z)-2-carboxy-4-methylthiazol-5(2H)-ylidene]ethyl phosphate + 2 H2O + H(+). Its pathway is cofactor biosynthesis; thiamine diphosphate biosynthesis. In terms of biological role, catalyzes the rearrangement of 1-deoxy-D-xylulose 5-phosphate (DXP) to produce the thiazole phosphate moiety of thiamine. Sulfur is provided by the thiocarboxylate moiety of the carrier protein ThiS. In vitro, sulfur can be provided by H(2)S. In Bacillus cereus (strain ATCC 10987 / NRS 248), this protein is Thiazole synthase.